Reading from the N-terminus, the 570-residue chain is Hydroxylamine reductase (570 aa).

Residues C5, C8, C17, and C23 each contribute to the [4Fe-4S] cluster site. Positions 266, 290, 334, 425, 453, 478, 513, and 515 each coordinate hybrid [4Fe-2O-2S] cluster. C425 is modified (cysteine persulfide).

The protein belongs to the HCP family. It depends on [4Fe-4S] cluster as a cofactor. The cofactor is hybrid [4Fe-2O-2S] cluster.

The protein localises to the cytoplasm. The catalysed reaction is A + NH4(+) + H2O = hydroxylamine + AH2 + H(+). Functionally, catalyzes the reduction of hydroxylamine to form NH(3) and H(2)O. This chain is Hydroxylamine reductase, found in Clostridium botulinum (strain 657 / Type Ba4).